Reading from the N-terminus, the 192-residue chain is Large ribosomal subunit protein uL18 (192 aa).

Belongs to the universal ribosomal protein uL18 family. As to quaternary structure, part of the 50S ribosomal subunit. Contacts the 5S and 23S rRNAs.

This is one of the proteins that bind and probably mediate the attachment of the 5S RNA into the large ribosomal subunit, where it forms part of the central protuberance. This chain is Large ribosomal subunit protein uL18, found in Methanothermobacter thermautotrophicus (strain ATCC 29096 / DSM 1053 / JCM 10044 / NBRC 100330 / Delta H) (Methanobacterium thermoautotrophicum).